Here is a 160-residue protein sequence, read N- to C-terminus: Large ribosomal subunit protein bL17 (160 aa).

Residues 123–141 show a composition bias toward basic and acidic residues; the sequence is DEKRQKRAEARAKRREEMQ. Positions 123 to 160 are disordered; it reads DEKRQKRAEARAKRREEMQKAMAEQQQAEGGEPEGGNE. The segment covering 142–152 has biased composition (low complexity); it reads KAMAEQQQAEG.

The protein belongs to the bacterial ribosomal protein bL17 family. Part of the 50S ribosomal subunit. Contacts protein L32.

This chain is Large ribosomal subunit protein bL17, found in Acidobacterium capsulatum (strain ATCC 51196 / DSM 11244 / BCRC 80197 / JCM 7670 / NBRC 15755 / NCIMB 13165 / 161).